Here is a 132-residue protein sequence, read N- to C-terminus: Small ribosomal subunit protein uS11 (132 aa).

Positions 1-24 (MAAQKQAARKPRRRDRKSVPVGQA) are disordered. Residues 7-16 (AARKPRRRDR) are compositionally biased toward basic residues.

The protein belongs to the universal ribosomal protein uS11 family. As to quaternary structure, part of the 30S ribosomal subunit. Interacts with proteins S7 and S18. Binds to IF-3.

Its function is as follows. Located on the platform of the 30S subunit, it bridges several disparate RNA helices of the 16S rRNA. Forms part of the Shine-Dalgarno cleft in the 70S ribosome. The polypeptide is Small ribosomal subunit protein uS11 (Bifidobacterium adolescentis (strain ATCC 15703 / DSM 20083 / NCTC 11814 / E194a)).